A 516-amino-acid chain; its full sequence is Amino-acid permease BAT1 (516 aa).

The next 12 helical transmembrane spans lie at 33 to 53 (LSVF…TGIT), 70 to 90 (YGWF…AEIC), 113 to 133 (PLAS…VTAS), 164 to 184 (VVIG…SLPI), 189 to 209 (FIGQ…MILI), 232 to 252 (LGIT…QYTI), 275 to 295 (GIIS…LGIS), 328 to 348 (FGSG…VFFC), 383 to 403 (VPIN…LTSL), 406 to 426 (IVAF…AYAI), 452 to 472 (VVGW…SLPV), and 483 to 503 (YTPV…LFSA).

The protein belongs to the amino acid-polyamine-organocation (APC) superfamily. Amino acid/choline transporter (ACT) (TC 2.A.3.4) family. In terms of tissue distribution, expressed in roots, rosette leaves, stems, cauline leaves, flowers and siliques.

It is found in the mitochondrion membrane. May play a role in primary carbon metabolism and plant growth, by mediating the transport of GABA from the cytosol to mitochondria. When expressed in a heterologous system (yeast), imports Arg and Ala across the plasma membrane and exports Lys and Glu, but does not transport proline. This chain is Amino-acid permease BAT1 (BAT1), found in Arabidopsis thaliana (Mouse-ear cress).